The following is a 149-amino-acid chain: MSRLRSLLSLILVLVTTVLVSCSSPQVEIPTTYSPEKIAQLQVYVNPIAVARDGMEKRLQGLIADQNWVDTQTYIHGPLGQLRRDMLGLASSLLPKDQDKAKTLAKEVFGHLERLDAAAKDRNGSQAKIQYQEALADFDSFLNLLPQAS.

Positions 1 to 21 (MSRLRSLLSLILVLVTTVLVS) are cleaved as a signal peptide. Residue Cys22 is the site of N-palmitoyl cysteine attachment. A lipid anchor (S-diacylglycerol cysteine) is attached at Cys22.

The protein belongs to the PsbQ family. CyanoQ subfamily. In terms of assembly, PSII is composed of 1 copy each of membrane proteins PsbA, PsbB, PsbC, PsbD, PsbE, PsbF, PsbH, PsbI, PsbJ, PsbK, PsbL, PsbM, PsbT, PsbX, PsbY, PsbZ, Psb30/Ycf12, peripheral proteins PsbO, CyanoQ (PsbQ), PsbU, PsbV and a large number of cofactors. It forms dimeric complexes. Pull-down experiments with His-tagged PsbQ pull down dimeric, but not monomeric, PSII. In terms of processing, the N-terminus is blocked. Upon expression in E.coli the N-terminus is modified with a diacylglycerol and an acyl group bound to two palmitates and one palmitoleate.

It localises to the cellular thylakoid membrane. Functionally, one of the extrinsic, lumenal subunits of photosystem II (PSII), which stabilize and protect the oxygen-evolving complex. PSII is a light-driven water plastoquinone oxidoreductase, using light energy to abstract electrons from H(2)O, generating a proton gradient subsequently used for ATP formation. Plays a role in the stability of the oxygen-evolving center on the luminal side of PSII. Required for optimal photoautotrophic growth in the absence of Ca(2+) or Cl(-), functions in optimizing PSII water oxidation/O(2) evolving activity. Requires PsbO to bind to PSII. The polypeptide is CyanoQ (Synechocystis sp. (strain ATCC 27184 / PCC 6803 / Kazusa)).